The primary structure comprises 190 residues: Apolipoprotein M (190 aa).

The not cleaved signal peptide spans 1 to 22 (MFHQVWAALLSLYGLLFNSMNQ). Disulfide bonds link cysteine 23–cysteine 169, cysteine 95–cysteine 185, and cysteine 130–cysteine 159. Tetradecanoate contacts are provided by glutamate 138 and arginine 145.

It belongs to the calycin superfamily. Lipocalin family. Highly divergent. Interacts with LRP2; LRP2 mediates APOM renal uptake and subsequent lysosomal degradation. As to expression, expressed by the liver; secreted in plasma.

The protein resides in the secreted. Probably involved in lipid transport. Can bind sphingosine-1-phosphate, myristic acid, palmitic acid and stearic acid, retinol, all-trans-retinoic acid and 9-cis-retinoic acid. This is Apolipoprotein M (Apom) from Mus musculus (Mouse).